A 144-amino-acid polypeptide reads, in one-letter code: Protein cornichon homolog 1 (144 aa).

The Cytoplasmic portion of the chain corresponds to 1–10 (MAFTFAAFCY). A helical membrane pass occupies residues 11 to 31 (MLALLLTAALIFFAIWHIIAF). Residues 32-56 (DELKTDYKNPIDQCNTLNPLVLPEY) lie on the Lumenal side of the membrane. A helical transmembrane segment spans residues 57–77 (LIHAFFCVMFLCAAEWLTLGL). The Cytoplasmic segment spans residues 78 to 122 (NMPLLAYHIWRYMSRPVMSGPGLYDPTTIMNADILAYCQKEGWCK). The helical transmembrane segment at 123-143 (LAFYLLAFFYYLYGMIYVLVS) threads the bilayer. Position 144 (S144) is a topological domain, lumenal.

It belongs to the cornichon family. As to quaternary structure, interacts with AREG immature precursor and with immature TGFA, i.e. with a prosegment and lacking full N-glycosylation, but not with the fully N-glycosylated form. In the Golgi apparatus, may form a complex with GORASP55 and transmembrane TGFA.

Its subcellular location is the endoplasmic reticulum membrane. The protein localises to the golgi apparatus membrane. Involved in the selective transport and maturation of TGF-alpha family proteins. This Bos taurus (Bovine) protein is Protein cornichon homolog 1 (CNIH1).